The chain runs to 356 residues: Nuclear hormone receptor family member nhr-169 (356 aa).

The segment at residues 16 to 90 (DPICSVCNFS…AGMKRSLVKE (75 aa)) is a DNA-binding region (nuclear receptor). 2 NR C4-type zinc fingers span residues 19–40 (CSVC…CSAC) and 56–72 (CKKD…CRAC). Residues 144 to 356 (DVSKILKTTP…KLYLHMGLPF (213 aa)) form the NR LBD domain.

Belongs to the nuclear hormone receptor family.

The protein resides in the nucleus. Its function is as follows. Orphan nuclear receptor. This chain is Nuclear hormone receptor family member nhr-169 (nhr-169), found in Caenorhabditis elegans.